Consider the following 301-residue polypeptide: MDILDKLVDLAQLTGSADVQCLLGGQWSVRHETLQCEGLVHIVTAGSGYLCIDGETSPRPVGTGDIVFFPRGLGHVLSHDGKYGESLQPDIRQNGTFMVKQCGNGLDMSLFCARFRYDTHADLMNGLPETVFLNIAHPSLQYVVSMLQLESEKPLTGTVSVVNALPSVLLVLILRAYLEQDKDVELSGVLKGWQDKRLGHLIQKVIDKPEDEWNIDKMVAAANMSRAQLMRRFKSQVGLSPHAFVNHIRLQKGALLLKKTPDSVLEVALSVGFQSETHFGKAFKRQYHVSPGQYRKEGGQK.

The HTH araC/xylS-type domain maps to 196–297 (KRLGHLIQKV…HVSPGQYRKE (102 aa)). 2 consecutive DNA-binding regions (H-T-H motif) follow at residues 216-237 (DKMV…KSQV) and 264-287 (VLEV…KRQY).

The affinity for the mtrCDE promoter increases 2-fold in the presence of TX-100, a known effector and substrate of the MtrCDE pump. Involved in the induction of the mtrCDE-encoded efflux pump. Binds specifically to the mtrCDE promoter region. Required for high-level inducible resistance to the detergent Triton X-100 (TX-100) and the spermicide nonoxynol-9 (N-9). In Neisseria gonorrhoeae, this protein is HTH-type transcriptional regulator MtrA.